Reading from the N-terminus, the 340-residue chain is MYG1 protein C27H6.8 (340 aa).

The protein belongs to the MYG1 family.

The polypeptide is MYG1 protein C27H6.8 (Caenorhabditis elegans).